The sequence spans 2016 residues: MANFLLPRGTSSFRRFTRESLAAIEKRMAEKQARGSTTLQESREGLPEEEAPRPQLDLQASKKLPDLYGNPPQELIGEPLEDLDPFYSTQKTFIVLNKGKTIFRFSATNALYVLSPFHPIRRAAVKILVHSLFNMLIMCTILTNCVFMAQHDPPPWTKYVEYTFTAIYTFESLVKILARGFCLHAFTFLRDPWNWLDFSVIIMAYTTEFVDLGNVSALRTFRVLRALKTISVISGLKTIVGALIQSVKKLADVMVLTVFCLSVFALIGLQLFMGNLRHKCVRNFTALNGTNGSVEADGLVWESLDLYLSDPENYLLKNGTSDVLLCGNSSDAGTCPEGYRCLKAGENPDHGYTSFDSFAWAFLALFRLMTQDCWERLYQQTLRSAGKIYMIFFMLVIFLGSFYLVNLILAVVAMAYEEQNQATIAETEEKEKRFQEAMEMLKKEHEALTIRGVDTVSRSSLEMSPLAPVNSHERRSKRRKRMSSGTEECGEDRLPKSDSEDGPRAMNHLSLTRGLSRTSMKPRSSRGSIFTFRRRDLGSEADFADDENSTAGESESHHTSLLVPWPLRRTSAQGQPSPGTSAPGHALHGKKNSTVDCNGVVSLLGAGDPEATSPGSHLLRPVMLEHPPDTTTPSEEPGGPQMLTSQAPCVDGFEEPGARQRALSAVSVLTSALEELEESRHKCPPCWNRLAQRYLIWECCPLWMSIKQGVKLVVMDPFTDLTITMCIVLNTLFMALEHYNMTSEFEEMLQVGNLVFTGIFTAEMTFKIIALDPYYYFQQGWNIFDSIIVILSLMELGLSRMSNLSVLRSFRLLRVFKLAKSWPTLNTLIKIIGNSVGALGNLTLVLAIIVFIFAVVGMQLFGKNYSELRDSDSGLLPRWHMMDFFHAFLIIFRILCGEWIETMWDCMEVSGQSLCLLVFLLVMVIGNLVVLNLFLALLLSSFSADNLTAPDEDREMNNLQLALARIQRGLRFVKRTTWDFCCGLLRQRPQKPAALAAQGQLPSCIATPYSPPPPETEKVPPTRKETRFEEGEQPGQGTPGDPEPVCVPIAVAESDTDDQEEDEENSLGTEEESSKQQESQPVSGGPEAPPDSRTWSQVSATASSEAEASASQADWRQQWKAEPQAPGCGETPEDSCSEGSTADMTNTAELLEQIPDLGQDVKDPEDCFTEGCVRRCPCCAVDTTQAPGKVWWRLRKTCYHIVEHSWFETFIIFMILLSSGALAFEDIYLEERKTIKVLLEYADKMFTYVFVLEMLLKWVAYGFKKYFTNAWCWLDFLIVDVSLVSLVANTLGFAEMGPIKSLRTLRALRPLRALSRFEGMRVVVNALVGAIPSIMNVLLVCLIFWLIFSIMGVNLFAGKFGRCINQTEGDLPLNYTIVNNKSQCESLNLTGELYWTKVKVNFDNVGAGYLALLQVATFKGWMDIMYAAVDSRGYEEQPQWEYNLYMYIYFVIFIIFGSFFTLNLFIGVIIDNFNQQKKKLGGQDIFMTEEQKKYYNAMKKLGSKKPQKPIPRPLNKYQGFIFDIVTKQAFDVTIMFLICLNMVTMMVETDDQSPEKINILAKINLLFVAIFTGECIVKLAALRHYYFTNSWNIFDFVVVILSIVGTVLSDIIQKYFFSPTLFRVIRLARIGRILRLIRGAKGIRTLLFALMMSLPALFNIGLLLFLVMFIYSIFGMANFAYVKWEAGIDDMFNFQTFANSMLCLFQITTSAGWDGLLSPILNTGPPYCDPTLPNSNGSRGDCGSPAVGILFFTTYIIISFLIVVNMYIAIILENFSVATEESTEPLSEDDFDMFYEIWEKFDPEATQFIEYSVLSDFADALSEPLRIAKPNQISLINMDLPMVSGDRIHCMDILFAFTKRVLGESGEMDALKIQMEEKFMAANPSKISYEPITTTLRRKHEEVSAMVIQRAFRRHLLQRSLKHASFLFRQQAGSGLSEEDAPEREGLIAYVMSENFSRPLGPPSSSSISSTSFPPSYDSVTRATSDNLQVRGSDYSHSEDLADFPPSPDRDRESIV.

The Cytoplasmic portion of the chain corresponds to Met-1 to Val-129. The tract at residues Met-28 to Leu-56 is disordered. Ser-36 is modified (phosphoserine). A Phosphothreonine modification is found at Thr-38. The segment covering Glu-41 to Pro-52 has biased composition (basic and acidic residues). An I repeat occupies Val-113–Asn-420. A helical membrane pass occupies residues His-130 to Ala-149. The Extracellular segment spans residues Gln-150–Thr-157. The helical transmembrane segment at Lys-158–Arg-179 threads the bilayer. At Gly-180–Phe-188 the chain is on the cytoplasmic side. Residues Leu-189 to Phe-209 traverse the membrane as a helical segment. The Extracellular segment spans residues Val-210–Ser-216. The N-linked (GlcNAc...) asparagine glycan is linked to Asn-214. A helical transmembrane segment spans residues Ala-217–Leu-236. The Cytoplasmic segment spans residues Lys-237–Lys-249. A helical membrane pass occupies residues Leu-250–Phe-272. The Extracellular segment spans residues Met-273–Ser-357. Residues Cys-280 and Cys-335 are joined by a disulfide bond. 5 N-linked (GlcNAc...) asparagine glycosylation sites follow: Asn-283, Asn-288, Asn-291, Asn-318, and Asn-328. Residues Phe-358–Tyr-378 constitute an intramembrane region (pore-forming). Residues Gln-379 to Gly-386 are Extracellular-facing. The chain crosses the membrane as a helical span at residues Lys-387–Ala-413. Topologically, residues Met-414 to Thr-719 are cytoplasmic. Ser-457, Ser-460, Ser-483, and Ser-484 each carry phosphoserine. The interval Leu-461–Lys-591 is disordered. Thr-486 carries the phosphothreonine modification. Basic and acidic residues predominate over residues Glu-491–Pro-503. Ser-497 and Ser-510 each carry phosphoserine. The segment covering Leu-509–Ser-528 has biased composition (polar residues). A dimethylated arginine; alternate mark is found at Arg-513 and Arg-526. Arg-513 and Arg-526 each carry omega-N-methylarginine; alternate. Phosphoserine occurs at positions 539, 571, 664, and 667. The segment covering Thr-570–Thr-580 has biased composition (polar residues). Arg-680 bears the Dimethylated arginine; alternate mark. Arg-680 is subject to Omega-N-methylarginine; alternate. An II repeat occupies Cys-699–Gly-969. The chain crosses the membrane as a helical span at residues Asp-720 to Glu-737. The Extracellular portion of the chain corresponds to His-738–Glu-746. Residue Asn-740 is glycosylated (N-linked (GlcNAc...) asparagine). The helical transmembrane segment at Glu-747 to Ile-769 threads the bilayer. Over Ala-770–Tyr-775 the chain is Cytoplasmic. Residues Tyr-776–Leu-796 form a helical membrane-spanning segment. Residues Gly-797 to Val-806 are Extracellular-facing. An N-linked (GlcNAc...) asparagine glycan is attached at Asn-803. Residues Leu-807–Ser-821 traverse the membrane as a helical segment. Topologically, residues Trp-822–Ala-838 are cytoplasmic. The helical transmembrane segment at Leu-839–Leu-860 threads the bilayer. The Extracellular portion of the chain corresponds to Phe-861–Phe-884. N-linked (GlcNAc...) asparagine glycosylation occurs at Asn-864. Residues Phe-885–Met-903 constitute an intramembrane region (pore-forming). Over Trp-904–Gln-912 the chain is Extracellular. Cys-906 and Cys-915 form a disulfide bridge. The chain crosses the membrane as a helical span at residues Ser-913–Ser-941. The Cytoplasmic segment spans residues Phe-942–Glu-1203. The disordered stretch occupies residues Ile-1005 to Thr-1141. Basic and acidic residues predominate over residues Glu-1015–Glu-1030. Residues Gln-1033–Pro-1044 show a composition bias toward low complexity. A compositionally biased stretch (acidic residues) spans Ser-1054–Glu-1071. Low complexity predominate over residues Ser-1096–Ala-1113. The III repeat unit spans residues Pro-1187 to Leu-1501. The chain crosses the membrane as a helical span at residues His-1204–Glu-1225. Residues Asp-1226–Lys-1236 lie on the Extracellular side of the membrane. A helical transmembrane segment spans residues Val-1237 to Val-1259. At Ala-1260–Thr-1268 the chain is on the cytoplasmic side. A helical membrane pass occupies residues Asn-1269–Leu-1291. The Extracellular segment spans residues Gly-1292 to Gly-1297. The chain crosses the membrane as a helical span at residues Pro-1298–Phe-1317. Over Glu-1318 to Ala-1330 the chain is Cytoplasmic. Residues Ile-1331 to Leu-1355 form a helical membrane-spanning segment. The Extracellular segment spans residues Phe-1356–Val-1400. 4 N-linked (GlcNAc...) asparagine glycosylation sites follow: Asn-1365, Asn-1374, Asn-1380, and Asn-1388. Positions Asn-1401 to Met-1422 form an intramembrane region, pore-forming. The Extracellular portion of the chain corresponds to Asp-1423 to Tyr-1445. A helical transmembrane segment spans residues Met-1446–Ile-1470. Residues Asp-1471 to Gln-1528 are Cytoplasmic-facing. At Ser-1503 the chain carries Phosphoserine; by PKC. Residues Ile-1510–Gln-1807 form an IV repeat. Residues Ala-1529–Val-1547 form a helical membrane-spanning segment. The Extracellular segment spans residues Glu-1548 to Asn-1558. Residues Ile-1559–Ala-1580 form a helical membrane-spanning segment. Topologically, residues Ala-1581 to Asn-1589 are cytoplasmic. The chain crosses the membrane as a helical span at residues Ser-1590–Ile-1612. Topologically, residues Gln-1613–Pro-1619 are extracellular. The helical transmembrane segment at Thr-1620–Ala-1640 threads the bilayer. Topologically, residues Lys-1641 to Leu-1650 are cytoplasmic. Residues Met-1651 to Phe-1679 form a helical membrane-spanning segment. The Extracellular portion of the chain corresponds to Ala-1680–Phe-1697. The pore-forming intramembrane region spans Ala-1698–Asp-1714. Residues Gly-1715–Pro-1745 lie on the Extracellular side of the membrane. N-linked (GlcNAc...) asparagine glycosylation occurs at Asn-1736. Residues Ala-1746 to Ile-1771 traverse the membrane as a helical segment. Topologically, residues Leu-1772–Val-2016 are cytoplasmic. The interval Asp-1839 to Glu-1901 is interaction with FGF13. One can recognise an IQ domain in the interval Glu-1901–Gln-1930. Residues Pro-1959–Ser-1979 are compositionally biased toward low complexity. Positions Pro-1959–Val-2016 are disordered. Residues Pro-1974–Tyr-1977 form an interaction with NEDD4, NEDD4L and WWP2 region. A compositionally biased stretch (polar residues) spans Thr-1981–Val-1990.

The protein belongs to the sodium channel (TC 1.A.1.10) family. Nav1.5/SCN5A subfamily. In terms of assembly, cannot form the same regulatory interactions with beta subunits as other Navs do. Interacts with the PDZ domain of the syntrophin SNTA1, SNTB1 and SNTB2. Interacts with NEDD4, NEDD4L, WWP2 and GPD1L. Interacts with CALM. Interacts with FGF13; the interaction is direct and FGF13 may regulate SNC5A density at membranes and function. May also interact with FGF12 and FGF14. Interacts with TMEM233. Interacts with the spider Jingzhaotoxin-I (AC P83974, AC B1P1B7, AC B1P1B8). Interacts with ANK3. Interacts with PKP2 (via N-terminus). Interacts with XIRP2; the interaction is required for normal action potential configuration in the heart. Post-translationally, ubiquitinated by NEDD4L; which promotes its endocytosis. Does not seem to be ubiquitinated by NEDD4 or WWP2. In terms of processing, phosphorylation at Ser-1503 by PKC in a highly conserved cytoplasmic loop slows inactivation of the sodium channel and reduces peak sodium currents. Regulated through phosphorylation by CaMK2D. Lacks the cysteine which covalently binds the conotoxin GVIIJ. This cysteine (position 868) is speculated in other sodium channel subunits alpha to be implied in covalent binding with the sodium channel subunit beta-2 or beta-4. Post-translationally, N-glycosylated at Asn-318, probably hinders potential interaction with regulatory subunits. In terms of tissue distribution, found in jejunal circular smooth muscle cells (at protein level). Expressed in human atrial and ventricular cardiac muscle but not in adult skeletal muscle, brain, myometrium, liver, or spleen. Isoform 4 is expressed in brain.

The protein localises to the cell membrane. Its subcellular location is the cytoplasm. The protein resides in the perinuclear region. It is found in the sarcolemma. It localises to the T-tubule. The protein localises to the cell junction. It catalyses the reaction Na(+)(in) = Na(+)(out). Its activity is regulated as follows. Channel inactivation is regulated by intracellular calcium levels. It is a tetrodotoxin-resistant voltage-gated Na(+) channel (Nav). Its function is as follows. Pore-forming subunit of Nav1.5, a voltage-gated sodium (Nav) channel that directly mediates the depolarizing phase of action potentials in excitable membranes. Navs, also called VGSCs (voltage-gated sodium channels) or VDSCs (voltage-dependent sodium channels), operate by switching between closed and open conformations depending on the voltage difference across the membrane. In the open conformation they allow Na(+) ions to selectively pass through the pore, along their electrochemical gradient. The influx of Na(+) ions provokes membrane depolarization, initiating the propagation of electrical signals throughout cells and tissues. Nav1.5 is the predominant sodium channel expressed in myocardial cells and it is responsible for the initial upstroke of the action potential in cardiac myocytes, thereby initiating the heartbeat. Required for normal electrical conduction including formation of the infranodal ventricular conduction system and normal action potential configuration, as a result of its interaction with XIRP2. The chain is Sodium channel protein type 5 subunit alpha from Homo sapiens (Human).